A 145-amino-acid polypeptide reads, in one-letter code: ATP synthase epsilon chain (145 aa).

It belongs to the ATPase epsilon chain family. As to quaternary structure, F-type ATPases have 2 components, CF(1) - the catalytic core - and CF(0) - the membrane proton channel. CF(1) has five subunits: alpha(3), beta(3), gamma(1), delta(1), epsilon(1). CF(0) has three main subunits: a, b and c.

Its subcellular location is the cell membrane. Functionally, produces ATP from ADP in the presence of a proton gradient across the membrane. The sequence is that of ATP synthase epsilon chain from Buchnera aphidicola subsp. Baizongia pistaciae (strain Bp).